The chain runs to 161 residues: SsrA-binding protein (161 aa).

This sequence belongs to the SmpB family.

It localises to the cytoplasm. Required for rescue of stalled ribosomes mediated by trans-translation. Binds to transfer-messenger RNA (tmRNA), required for stable association of tmRNA with ribosomes. tmRNA and SmpB together mimic tRNA shape, replacing the anticodon stem-loop with SmpB. tmRNA is encoded by the ssrA gene; the 2 termini fold to resemble tRNA(Ala) and it encodes a 'tag peptide', a short internal open reading frame. During trans-translation Ala-aminoacylated tmRNA acts like a tRNA, entering the A-site of stalled ribosomes, displacing the stalled mRNA. The ribosome then switches to translate the ORF on the tmRNA; the nascent peptide is terminated with the 'tag peptide' encoded by the tmRNA and targeted for degradation. The ribosome is freed to recommence translation, which seems to be the essential function of trans-translation. In Mycolicibacterium smegmatis (strain ATCC 700084 / mc(2)155) (Mycobacterium smegmatis), this protein is SsrA-binding protein.